Consider the following 114-residue polypeptide: Probable 4-amino-4-deoxy-L-arabinose-phosphoundecaprenol flippase subunit ArnE (114 aa).

3 helical membrane passes run 41 to 61, 64 to 84, and 91 to 111; these read MWLW…LLVL, MDVG…TLVG, and PVDP…FQLG.

This sequence belongs to the ArnE family. As to quaternary structure, heterodimer of ArnE and ArnF.

It localises to the cell inner membrane. It participates in bacterial outer membrane biogenesis; lipopolysaccharide biosynthesis. Its function is as follows. Translocates 4-amino-4-deoxy-L-arabinose-phosphoundecaprenol (alpha-L-Ara4N-phosphoundecaprenol) from the cytoplasmic to the periplasmic side of the inner membrane. This Pseudomonas savastanoi pv. phaseolicola (strain 1448A / Race 6) (Pseudomonas syringae pv. phaseolicola (strain 1448A / Race 6)) protein is Probable 4-amino-4-deoxy-L-arabinose-phosphoundecaprenol flippase subunit ArnE.